A 994-amino-acid chain; its full sequence is Glycine dehydrogenase (decarboxylating) (994 aa).

The tract at residues 1-20 is disordered; that stretch reads MTDHAENRCGLEGPRPFSSR. At lysine 716 the chain carries N6-(pyridoxal phosphate)lysine.

Belongs to the GcvP family. The glycine cleavage system is composed of four proteins: P, T, L and H. The cofactor is pyridoxal 5'-phosphate.

It carries out the reaction N(6)-[(R)-lipoyl]-L-lysyl-[glycine-cleavage complex H protein] + glycine + H(+) = N(6)-[(R)-S(8)-aminomethyldihydrolipoyl]-L-lysyl-[glycine-cleavage complex H protein] + CO2. In terms of biological role, the glycine cleavage system catalyzes the degradation of glycine. The P protein binds the alpha-amino group of glycine through its pyridoxal phosphate cofactor; CO(2) is released and the remaining methylamine moiety is then transferred to the lipoamide cofactor of the H protein. The chain is Glycine dehydrogenase (decarboxylating) from Cutibacterium acnes (strain DSM 16379 / KPA171202) (Propionibacterium acnes).